A 453-amino-acid chain; its full sequence is Secreted aspartic protease 10 (453 aa).

A signal peptide spans 1–20 (MDLVIMNFVFLLYLTSVVKC). The 321-residue stretch at 52-372 (YTTELEIGSN…DLQDMTISVA (321 aa)) folds into the Peptidase A1 domain. The active site involves Asp-70. 70–72 (DTG) contributes to the pepstatin A binding site. The cysteines at positions 85 and 112 are disulfide-linked. Residues Asn-115 and Asn-128 are each glycosylated (N-linked (GlcNAc...) asparagine). 138–139 (VD) contacts pepstatin A. N-linked (GlcNAc...) asparagine glycans are attached at residues Asn-168, Asn-208, Asn-211, and Asn-245. Asp-266 is an active-site residue. Residue 266–270 (DTGST) coordinates pepstatin A. Asn-287 is a glycosylation site (N-linked (GlcNAc...) asparagine). Cysteines 301 and 333 form a disulfide. The tract at residues 387 to 432 (NPNEDQNEVPTSTSFTQSASSSGSQPSSTISGENMDKNTTSSSSGN) is disordered. Low complexity predominate over residues 397–417 (TSTSFTQSASSSGSQPSSTIS). Positions 423–432 (KNTTSSSSGN) are enriched in polar residues. N-linked (GlcNAc...) asparagine glycosylation is present at Asn-424. Ser-429 is lipidated: GPI-anchor amidated serine. A propeptide spans 430-453 (SGNCQTRSWIAILSALFLVYIHII) (removed in mature form).

Belongs to the peptidase A1 family. Post-translationally, the GPI-anchor is attached to the protein in the endoplasmic reticulum and serves to target the protein to the cell surface. There, the glucosamine-inositol phospholipid moiety is cleaved off and the GPI-modified mannoprotein is covalently attached via its lipidless GPI glycan remnant to the 1,6-beta-glucan of the outer cell wall layer.

The protein localises to the secreted. It is found in the cell membrane. The enzyme catalyses Preferential cleavage at the carboxyl of hydrophobic amino acids, but fails to cleave 15-Leu-|-Tyr-16, 16-Tyr-|-Leu-17 and 24-Phe-|-Phe-25 of insulin B chain. Activates trypsinogen, and degrades keratin.. Its function is as follows. Secreted aspartic peptidases (SAPs) are a group of ten acidic hydrolases considered as key virulence factors. These enzymes supply the fungus with nutrient amino acids as well as are able to degrade the selected host's proteins involved in the immune defense. Required for cell surface integrity and cell separation during budding. This chain is Secreted aspartic protease 10, found in Candida albicans (strain SC5314 / ATCC MYA-2876) (Yeast).